We begin with the raw amino-acid sequence, 127 residues long: ATP synthase epsilon chain (127 aa).

This sequence belongs to the ATPase epsilon chain family. F-type ATPases have 2 components, CF(1) - the catalytic core - and CF(0) - the membrane proton channel. CF(1) has five subunits: alpha(3), beta(3), gamma(1), delta(1), epsilon(1). CF(0) has three main subunits: a, b and c.

The protein localises to the cell inner membrane. Its function is as follows. Produces ATP from ADP in the presence of a proton gradient across the membrane. The sequence is that of ATP synthase epsilon chain from Leptospira borgpetersenii serovar Hardjo-bovis (strain JB197).